We begin with the raw amino-acid sequence, 320 residues long: ATP-dependent 6-phosphofructokinase isozyme 1 (320 aa).

Glycine 12 is a binding site for ATP. Residues 22–26 (RGVVR) and 55–60 (RYSVSD) each bind ADP. ATP-binding positions include 73–74 (RF) and 103–106 (GDGS). Residue aspartate 104 participates in Mg(2+) binding. Position 126–128 (126–128 (TID)) interacts with substrate. The active-site Proton acceptor is aspartate 128. Arginine 155 is a binding site for ADP. Residues arginine 163 and 170-172 (MGR) contribute to the substrate site. Residues 186-188 (GCE), lysine 212, and 214-216 (KKH) each bind ADP. Residues glutamate 223, arginine 244, and 250–253 (HIQR) each bind substrate.

Belongs to the phosphofructokinase type A (PFKA) family. ATP-dependent PFK group I subfamily. Prokaryotic clade 'B1' sub-subfamily. Homotetramer. Mg(2+) is required as a cofactor.

The protein localises to the cytoplasm. It catalyses the reaction beta-D-fructose 6-phosphate + ATP = beta-D-fructose 1,6-bisphosphate + ADP + H(+). The protein operates within carbohydrate degradation; glycolysis; D-glyceraldehyde 3-phosphate and glycerone phosphate from D-glucose: step 3/4. With respect to regulation, allosterically activated by ADP and other diphosphonucleosides, and allosterically inhibited by phosphoenolpyruvate. Functionally, catalyzes the phosphorylation of D-fructose 6-phosphate to fructose 1,6-bisphosphate by ATP, the first committing step of glycolysis. In Shigella boydii serotype 18 (strain CDC 3083-94 / BS512), this protein is ATP-dependent 6-phosphofructokinase isozyme 1.